Here is a 270-residue protein sequence, read N- to C-terminus: D-aminoacyl-tRNA deacylase (270 aa).

The protein belongs to the DtdA deacylase family. Monomer. Zn(2+) is required as a cofactor.

It catalyses the reaction a D-aminoacyl-tRNA + H2O = a tRNA + a D-alpha-amino acid + H(+). The catalysed reaction is glycyl-tRNA(Ala) + H2O = tRNA(Ala) + glycine + H(+). D-aminoacyl-tRNA deacylase with broad substrate specificity. By recycling D-aminoacyl-tRNA to D-amino acids and free tRNA molecules, this enzyme counteracts the toxicity associated with the formation of D-aminoacyl-tRNA entities in vivo. The sequence is that of D-aminoacyl-tRNA deacylase from Pyrococcus furiosus (strain ATCC 43587 / DSM 3638 / JCM 8422 / Vc1).